The primary structure comprises 130 residues: Small ribosomal subunit protein uS9 (130 aa).

A disordered region spans residues 99–130 (KSAGMLTRDPRMKERKKPGLKKARKASQFSKR). Over residues 111–130 (KERKKPGLKKARKASQFSKR) the composition is skewed to basic residues.

It belongs to the universal ribosomal protein uS9 family.

The sequence is that of Small ribosomal subunit protein uS9 from Latilactobacillus sakei subsp. sakei (strain 23K) (Lactobacillus sakei subsp. sakei).